The sequence spans 440 residues: MLITNPALLGILASLVPLALGAPNQPIQARSRKCVIPSSYASSHGTADDSPAVASAFAQCAENSVIVFQEGVDYNIFHPIKATNLSNVEIRVLGNLHLPQDITAVQNIVKSGQSTWFTFQGPRVDWTGADDIKNGWINSYGQAWWDANPANSSSFPNRPHLMSYKTSQASIKNFRSRKPIAWNVKLQGDDITVSHAIVDATSTGGFPFNTDGFDVEGTNISITDSVMFNGDDAIAVNTPSHNIVFARNTIGYQSHGMSIGSLGKDPTDFANITNLRFEDVTVIDALYAARFKSWSGGRGLVKNVVWKNIRTFNVTFPIFVTQSYSDQSASRSGTIDPFSSVMMEDFTWSDFSGTINTYHPGDGSCVTDPCWYNVGLPNLKHTEAIVLECNTESSCKNFRTEGIRLHPQSKDSPSVICMKATAELNPKLGFECKNGTFVPH.

The N-terminal stretch at 1 to 21 (MLITNPALLGILASLVPLALG) is a signal peptide. 2 N-linked (GlcNAc...) asparagine glycosylation sites follow: Asn84 and Asn151. 3 PbH1 repeats span residues 188–210 (GDDI…PFNT), 217–238 (GTNI…AVNT), and 240–261 (SHNI…SIGS). N-linked (GlcNAc...) asparagine glycosylation is present at Asn219. The active-site Proton donor is the Asp231. The active site involves His255. Asn271 carries an N-linked (GlcNAc...) asparagine glycan. Residues 272-293 (ITNLRFEDVTVIDALYAARFKS) form a PbH1 4 repeat. Residue Asn313 is glycosylated (N-linked (GlcNAc...) asparagine). Cys389 and Cys395 form a disulfide bridge. The N-linked (GlcNAc...) asparagine glycan is linked to Asn434.

Belongs to the glycosyl hydrolase 28 family.

The protein resides in the secreted. It catalyses the reaction [(1-&gt;4)-alpha-D-galacturonosyl](n) + H2O = alpha-D-galacturonate + [(1-&gt;4)-alpha-D-galacturonosyl](n-1). Its function is as follows. Specific in hydrolyzing the terminal glycosidic bond of polygalacturonic acid and oligogalacturonates. This is Probable exopolygalacturonase C (pgxC) from Aspergillus fumigatus (strain ATCC MYA-4609 / CBS 101355 / FGSC A1100 / Af293) (Neosartorya fumigata).